The following is an 82-amino-acid chain: Small ribosomal subunit protein bS16 (82 aa).

This sequence belongs to the bacterial ribosomal protein bS16 family.

This is Small ribosomal subunit protein bS16 from Glaesserella parasuis serovar 5 (strain SH0165) (Haemophilus parasuis).